The chain runs to 279 residues: Thioredoxin domain-containing protein plp1 (279 aa).

The segment covering 56 to 70 (RKEDTQDYNEPELHN) has biased composition (basic and acidic residues). Positions 56-75 (RKEDTQDYNEPELHNSNDPT) are disordered. Positions 137 to 248 (FLTVENEREV…LEFRLLKSSA (112 aa)) constitute a Thioredoxin domain. The span at 254–267 (EESSSNKSIYHDEL) shows a compositional bias: basic and acidic residues. A disordered region spans residues 254-279 (EESSSNKSIYHDELQNNQSDDSDFFE). Phosphoserine occurs at positions 272 and 275.

Belongs to the phosducin family.

It localises to the cytoplasm. It is found in the nucleus. Functionally, inhibits early G-protein signaling events following pheromone stimulation. May help create heterodimerizable beta-tubulin by facilitating the efficient transfer of nascent beta-tubulin polypeptides to the folding apparatus. The chain is Thioredoxin domain-containing protein plp1 (plp1) from Schizosaccharomyces pombe (strain 972 / ATCC 24843) (Fission yeast).